A 129-amino-acid polypeptide reads, in one-letter code: Large ribosomal subunit protein bL20 (129 aa).

This sequence belongs to the bacterial ribosomal protein bL20 family.

In terms of biological role, binds directly to 23S ribosomal RNA and is necessary for the in vitro assembly process of the 50S ribosomal subunit. It is not involved in the protein synthesizing functions of that subunit. This chain is Large ribosomal subunit protein bL20, found in Mycolicibacterium smegmatis (strain ATCC 700084 / mc(2)155) (Mycobacterium smegmatis).